A 227-amino-acid polypeptide reads, in one-letter code: Urease accessory protein UreG (227 aa).

Residues M1 to D10 are compositionally biased toward basic and acidic residues. The tract at residues M1–P22 is disordered. Residue G35–T42 participates in GTP binding.

This sequence belongs to the SIMIBI class G3E GTPase family. UreG subfamily. In terms of assembly, homodimer. UreD, UreF and UreG form a complex that acts as a GTP-hydrolysis-dependent molecular chaperone, activating the urease apoprotein by helping to assemble the nickel containing metallocenter of UreC. The UreE protein probably delivers the nickel.

It localises to the cytoplasm. Functionally, facilitates the functional incorporation of the urease nickel metallocenter. This process requires GTP hydrolysis, probably effectuated by UreG. The protein is Urease accessory protein UreG of Streptomyces avermitilis (strain ATCC 31267 / DSM 46492 / JCM 5070 / NBRC 14893 / NCIMB 12804 / NRRL 8165 / MA-4680).